We begin with the raw amino-acid sequence, 338 residues long: Mitochondrial glutathione transporter SLC25A40 (338 aa).

Solcar repeat units follow at residues 13–131 (VTPL…LTAL), 139–223 (NESR…LKKW), and 233–327 (PTFM…GKSF). 6 helical membrane-spanning segments follow: residues 19-39 (MFAS…FDVV), 103-123 (LWSG…IYFT), 145-165 (IVAG…LELI), 199-220 (WAPT…YEVL), 239-259 (FTSG…FDVV), and 298-318 (GLFT…AVMI).

This sequence belongs to the mitochondrial carrier (TC 2.A.29) family.

It is found in the mitochondrion inner membrane. It catalyses the reaction glutathione(in) = glutathione(out). Functionally, probable mitochondrial transporter required for glutathione import into mitochondria. Glutathione, which plays key roles in oxidative metabolism, is produced exclusively in the cytosol and is imported in many organelles. Mitochondrial glutathione is required for the activity and stability of proteins containing iron-sulfur clusters, as well as erythropoiesis. This Bos taurus (Bovine) protein is Mitochondrial glutathione transporter SLC25A40.